The following is a 153-amino-acid chain: T cell receptor delta constant (153 aa).

Asn-14 carries N-linked (GlcNAc...) asparagine glycosylation. A disulfide bridge links Cys-20 with Cys-71. An N-linked (GlcNAc...) asparagine glycan is attached at Asn-77. Over residues 85–102 (FEVKTDSTDHVKPKETEN) the composition is skewed to basic and acidic residues. Residues 85–112 (FEVKTDSTDHVKPKETENTKQPSKSCHK) are disordered. The helical transmembrane segment at 130–152 (LGLRMLFAKTVAVNFLLTAKLFF) threads the bilayer.

In terms of assembly, gamma-delta TR is a heterodimer composed of a gamma and delta chain; disulfide-linked. The gamma-delta TR is associated with the transmembrane signaling CD3 coreceptor proteins following the stoichiometry: a single gamma-delta TR heterodimer associates with one CD3D-CD3E heterodimer, one CD3G-CD3E heterodimer and one CD247 homodimer forming a stable octameric structure. Upon activation, gamma-delta TR complex associates with FCER1G to initiate intracellular signaling.

The protein resides in the cell membrane. In terms of biological role, constant region of T cell receptor (TR) delta chain that participates in the antigen recognition. Gamma-delta TRs recognize a variety of self and foreign non-peptide antigens frequently expressed at the epithelial boundaries between the host and external environment, including endogenous lipids presented by MH-like protein CD1D and phosphoantigens presented by butyrophilin-like molecule BTN3A1. Upon antigen recognition induces rapid, innate-like immune responses involved in pathogen clearance and tissue repair. Binding of gamma-delta TR complex to antigen triggers phosphorylation of immunoreceptor tyrosine-based activation motifs (ITAMs) in the CD3 chains by the LCK and FYN kinases, allowing the recruitment, phosphorylation, and activation of ZAP70 that facilitates phosphorylation of the scaffolding proteins LCP2 and LAT. This lead to the formation of a supramolecular signalosome that recruits the phospholipase PLCG1, resulting in calcium mobilization and ERK activation, ultimately leading to T cell expansion and differentiation into effector cells. Gamma-delta TRs are produced through somatic rearrangement of a limited repertoire of variable (V), diversity (D), and joining (J) genes. The potential diversity of gamma-delta TRs is conferred by the unique ability to rearrange (D) genes in tandem and to utilize all three reading frames. The combinatorial diversity is considerably increased by the sequence exonuclease trimming and random nucleotide (N) region additions which occur during the V-(D)-J rearrangements. This chain is T cell receptor delta constant, found in Homo sapiens (Human).